The chain runs to 921 residues: Isoleucine--tRNA ligase (921 aa).

Positions 57–67 (PYANGDIHMGH) match the 'HIGH' region motif. Residue Glu552 participates in L-isoleucyl-5'-AMP binding. Positions 593–597 (KMSKS) match the 'KMSKS' region motif. Residue Lys596 participates in ATP binding. 4 residues coordinate Zn(2+): Cys888, Cys891, Cys908, and Cys911.

This sequence belongs to the class-I aminoacyl-tRNA synthetase family. IleS type 1 subfamily. Monomer. The cofactor is Zn(2+).

It localises to the cytoplasm. The catalysed reaction is tRNA(Ile) + L-isoleucine + ATP = L-isoleucyl-tRNA(Ile) + AMP + diphosphate. In terms of biological role, catalyzes the attachment of isoleucine to tRNA(Ile). As IleRS can inadvertently accommodate and process structurally similar amino acids such as valine, to avoid such errors it has two additional distinct tRNA(Ile)-dependent editing activities. One activity is designated as 'pretransfer' editing and involves the hydrolysis of activated Val-AMP. The other activity is designated 'posttransfer' editing and involves deacylation of mischarged Val-tRNA(Ile). The chain is Isoleucine--tRNA ligase from Bacillus anthracis (strain A0248).